We begin with the raw amino-acid sequence, 1151 residues long: PPi-type phosphoenolpyruvate carboxykinase 1 (1151 aa).

The stretch at 1083 to 1129 (RQKLEVAKLNKDLAYLNKTIAEKPRLAETLNKQIAAVKEELQYVSSE) forms a coiled coil.

Belongs to the PPi-type phosphoenolpyruvate carboxykinase family. As to quaternary structure, monomer and trimer; forms heterotrimers with PEPCK2 and PEPCK3.

The protein resides in the cytoplasm. The protein localises to the cytosol. It carries out the reaction oxaloacetate + diphosphate = phosphoenolpyruvate + phosphate + CO2. Its function is as follows. Inorganic pyrophosphate (PPi)-dependent phosphoenolpyruvate carboxykinase, which regulates the carbon flow of the central metabolism by fixing CO(2) to phosphoenolpyruvate to produce oxaloacetate. Can also produce pyruvate and diphosphate from phosphoenolpyruvate and phosphate. In Entamoeba histolytica (strain ATCC 30459 / HM-1:IMSS / ABRM), this protein is PPi-type phosphoenolpyruvate carboxykinase 1.